A 310-amino-acid chain; its full sequence is Glutaminase (310 aa).

Substrate contacts are provided by Ser66, Asn117, Glu161, Asn168, Tyr192, Tyr244, and Val262.

This sequence belongs to the glutaminase family. As to quaternary structure, homotetramer.

The enzyme catalyses L-glutamine + H2O = L-glutamate + NH4(+). This is Glutaminase from Desulfovibrio desulfuricans (strain ATCC 27774 / DSM 6949 / MB).